The chain runs to 57 residues: Potassium channel toxin alpha-KTx 4.2 (57 aa).

The first 20 residues, 1-20 (MKVLYGILIIFILCSMFYLS), serve as a signal peptide directing secretion. Residues 21–22 (QE) constitute a propeptide, removed by a carboxypeptidase. 3 disulfides stabilise this stretch: Cys29–Cys50, Cys35–Cys55, and Cys39–Cys57.

The protein belongs to the short scorpion toxin superfamily. Potassium channel inhibitor family. Alpha-KTx 04 subfamily. Expressed by the venom gland.

The protein localises to the secreted. Its function is as follows. Blocker for small-conductance calcium-activated potassium channels KCa2.2/KCNN2 (Kd=80 nM) and KCa2.3/KCNN3 (Kd=197 nM) and ERG1/Kv11.1/KCNH2 potassium channels (53% inhibition at 5 uM). Has also been shown to inhibit Kv1.1/KCNA1 and Nav1.7/SCN9A with a moderate potency, as well as Kv11.1/KCNH2/ERG1 and Kv1.2/KCNA2 with a low potency. This chain is Potassium channel toxin alpha-KTx 4.2, found in Tityus serrulatus (Brazilian scorpion).